The following is a 286-amino-acid chain: Inositol polyphosphate multikinase alpha (286 aa).

Residues 1–22 (MQLKVPEHQVAGHIAKDGKPGP) form a disordered region.

This sequence belongs to the inositol phosphokinase (IPK) family. Phosphorylated. Detected in leaves, stems, roots, siliques and flowers. Highly expressed in root tissues, anthers, the stigma, pollen grains and growing pollen tubes.

Its subcellular location is the nucleus. The protein resides in the cell membrane. The enzyme catalyses 1D-myo-inositol 1,4,5-trisphosphate + 2 ATP = 1D-myo-inositol 1,3,4,5,6-pentakisphosphate + 2 ADP + 2 H(+). It catalyses the reaction 1D-myo-inositol 1,3,4,6-tetrakisphosphate + ATP = 1D-myo-inositol 1,3,4,5,6-pentakisphosphate + ADP + H(+). In terms of biological role, inositol phosphate kinase with a broad substrate specificity. Phosphorylates inositol 1,4,5-trisphosphate (Ins(1,4,5)P3), inositol 1,4,5,6-tetrakisphosphate (Ins(1,4,5,6)P4), inositol 1,3,4,5-tetrakisphosphate (Ins(1,3,4,5)P4), inositol 1,3,4,6-tetrakisphosphate (Ins(1,3,4,6)P4) and inositol 1,2,3,4,6-pentakisphosphate (Ins(1,2,3,4,6)P5) but not inositol 1,4-bisphosphate (Ins(1,4)P2), inositol 1,3,4-trisphosphate (Ins(1,3,4)P3), inositol 1,2,6-trisphosphate (Ins(1,2,6)P3), inositol 3,4,5,6-tetrakisphosphate (Ins(3,4,5,6)P4), inositol 1,3,4,5,6-pentakisphosphate (Ins(1,3,4,5,6)P5), inositol 1,2,4,5,6-pentakisphosphate (Ins(1,2,4,5,6)P5) or inositol hexakisphosphate (InsP6). Regulates pollen and root development probably through the regulation of InsP3-mediated calcium accumulation. This is Inositol polyphosphate multikinase alpha (IPK2a) from Arabidopsis thaliana (Mouse-ear cress).